Reading from the N-terminus, the 226-residue chain is Ras-related protein RABA4a (226 aa).

N-acetylthreonine is present on threonine 2. GTP is bound at residue 24-31 (GDSAVGKS). Positions 46 to 54 (SKATIGVEF) match the Effector region motif. Residues 72 to 76 (DTAGQ), 130 to 133 (NKSD), and 160 to 161 (SA) each bind GTP. The interval 189–226 (ASEDQENGNPGSLAGKKIDIVPGPGQVIPNKSNMCCNS) is disordered. Over residues 217 to 226 (PNKSNMCCNS) the composition is skewed to polar residues. 2 S-geranylgeranyl cysteine lipidation sites follow: cysteine 223 and cysteine 224.

The protein belongs to the small GTPase superfamily. Rab family. Interacts with TCTP1.

The protein resides in the cell membrane. Functionally, intracellular vesicle trafficking and protein transport. This chain is Ras-related protein RABA4a, found in Arabidopsis thaliana (Mouse-ear cress).